A 324-amino-acid chain; its full sequence is MAELEFEKPVVELRNKIRELKDYTKNSQMDFSEEIRILEDKLENLEEDIYGNMKVWDRVQIARHAERPTTLDYIEHLFTDFFECHGDRLFGDDAAIVGGIAKYKGMPVTVIGHQRGKDTKENIRRNFGMPHPEGYRKALRLMKQAEKFNRPIICFIDTKGAYPGKAAEERGQSEAIARNLFEMAGLTVPVICIVIGEGGSGGALGLGVGDYIHMLENSTYSVITPEGAAAILWKDAGKAKEAAEAMRITAADLKELGVIDEIIPEAKGGAHRNVLKQSENIDLMLRKTFEQLNGISKDELIEKRYEKYMKIGQVSFSNASIWIK.

In terms of domain architecture, CoA carboxyltransferase C-terminal spans Ile37–Gln291.

This sequence belongs to the AccA family. As to quaternary structure, acetyl-CoA carboxylase is a heterohexamer composed of biotin carboxyl carrier protein (AccB), biotin carboxylase (AccC) and two subunits each of ACCase subunit alpha (AccA) and ACCase subunit beta (AccD).

The protein localises to the cytoplasm. The catalysed reaction is N(6)-carboxybiotinyl-L-lysyl-[protein] + acetyl-CoA = N(6)-biotinyl-L-lysyl-[protein] + malonyl-CoA. The protein operates within lipid metabolism; malonyl-CoA biosynthesis; malonyl-CoA from acetyl-CoA: step 1/1. Component of the acetyl coenzyme A carboxylase (ACC) complex. First, biotin carboxylase catalyzes the carboxylation of biotin on its carrier protein (BCCP) and then the CO(2) group is transferred by the carboxyltransferase to acetyl-CoA to form malonyl-CoA. The chain is Acetyl-coenzyme A carboxylase carboxyl transferase subunit alpha from Bacillus cereus (strain Q1).